A 467-amino-acid chain; its full sequence is Cysteine--tRNA ligase (467 aa).

Zn(2+) is bound at residue Cys-28. Residues 30 to 40 (PTVYNYIHVGN) carry the 'HIGH' region motif. Zn(2+) contacts are provided by Cys-212, His-237, and Glu-241. A 'KMSKS' region motif is present at residues 269–273 (KMSKS). Lys-272 contributes to the ATP binding site.

It belongs to the class-I aminoacyl-tRNA synthetase family. As to quaternary structure, monomer. The cofactor is Zn(2+).

The protein localises to the cytoplasm. It catalyses the reaction tRNA(Cys) + L-cysteine + ATP = L-cysteinyl-tRNA(Cys) + AMP + diphosphate. The sequence is that of Cysteine--tRNA ligase from Oenococcus oeni (strain ATCC BAA-331 / PSU-1).